A 379-amino-acid chain; its full sequence is Cytochrome b (379 aa).

4 helical membrane passes run 33 to 53 (FGSL…FLDM), 77 to 98 (WLIR…YLHI), 113 to 133 (WNIG…GYVL), and 178 to 198 (FFAF…VHLL). 2 residues coordinate heme b: His-83 and His-97. His-182 and His-196 together coordinate heme b. Position 201 (His-201) interacts with a ubiquinone. The next 4 membrane-spanning stretches (helical) occupy residues 226-246 (TKDF…VPFF), 288-308 (LGGV…PHIQ), 320-340 (ISQF…WIGG), and 347-367 (FIII…VLMP).

The protein belongs to the cytochrome b family. As to quaternary structure, the cytochrome bc1 complex contains 11 subunits: 3 respiratory subunits (MT-CYB, CYC1 and UQCRFS1), 2 core proteins (UQCRC1 and UQCRC2) and 6 low-molecular weight proteins (UQCRH/QCR6, UQCRB/QCR7, UQCRQ/QCR8, UQCR10/QCR9, UQCR11/QCR10 and a cleavage product of UQCRFS1). This cytochrome bc1 complex then forms a dimer. Heme b is required as a cofactor.

The protein resides in the mitochondrion inner membrane. Its function is as follows. Component of the ubiquinol-cytochrome c reductase complex (complex III or cytochrome b-c1 complex) that is part of the mitochondrial respiratory chain. The b-c1 complex mediates electron transfer from ubiquinol to cytochrome c. Contributes to the generation of a proton gradient across the mitochondrial membrane that is then used for ATP synthesis. This is Cytochrome b (MT-CYB) from Dipodomys nelsoni (Nelson's kangaroo rat).